Reading from the N-terminus, the 557-residue chain is Dihydroxy-acid dehydratase (557 aa).

[2Fe-2S] cluster is bound at residue Cys-50. Asp-82 lines the Mg(2+) pocket. Cys-123 serves as a coordination point for [2Fe-2S] cluster. The Mg(2+) site is built by Asp-124 and Lys-125. Lys-125 carries the post-translational modification N6-carboxylysine. Residue Cys-195 participates in [2Fe-2S] cluster binding. Glu-447 serves as a coordination point for Mg(2+). Ser-473 serves as the catalytic Proton acceptor.

Belongs to the IlvD/Edd family. In terms of assembly, homodimer. [2Fe-2S] cluster is required as a cofactor. Requires Mg(2+) as cofactor.

The enzyme catalyses (2R)-2,3-dihydroxy-3-methylbutanoate = 3-methyl-2-oxobutanoate + H2O. It carries out the reaction (2R,3R)-2,3-dihydroxy-3-methylpentanoate = (S)-3-methyl-2-oxopentanoate + H2O. It functions in the pathway amino-acid biosynthesis; L-isoleucine biosynthesis; L-isoleucine from 2-oxobutanoate: step 3/4. It participates in amino-acid biosynthesis; L-valine biosynthesis; L-valine from pyruvate: step 3/4. Functionally, functions in the biosynthesis of branched-chain amino acids. Catalyzes the dehydration of (2R,3R)-2,3-dihydroxy-3-methylpentanoate (2,3-dihydroxy-3-methylvalerate) into 2-oxo-3-methylpentanoate (2-oxo-3-methylvalerate) and of (2R)-2,3-dihydroxy-3-methylbutanoate (2,3-dihydroxyisovalerate) into 2-oxo-3-methylbutanoate (2-oxoisovalerate), the penultimate precursor to L-isoleucine and L-valine, respectively. The chain is Dihydroxy-acid dehydratase from Metallosphaera sedula (strain ATCC 51363 / DSM 5348 / JCM 9185 / NBRC 15509 / TH2).